The sequence spans 186 residues: Large ribosomal subunit protein uL5 (186 aa).

This sequence belongs to the universal ribosomal protein uL5 family. As to quaternary structure, part of the 50S ribosomal subunit; part of the 5S rRNA/L5/L18/L25 subcomplex. Contacts the 5S rRNA and the P site tRNA. Forms a bridge to the 30S subunit in the 70S ribosome.

In terms of biological role, this is one of the proteins that bind and probably mediate the attachment of the 5S RNA into the large ribosomal subunit, where it forms part of the central protuberance. In the 70S ribosome it contacts protein S13 of the 30S subunit (bridge B1b), connecting the 2 subunits; this bridge is implicated in subunit movement. Contacts the P site tRNA; the 5S rRNA and some of its associated proteins might help stabilize positioning of ribosome-bound tRNAs. This chain is Large ribosomal subunit protein uL5, found in Karelsulcia muelleri (strain GWSS) (Sulcia muelleri).